A 287-amino-acid polypeptide reads, in one-letter code: Bifunctional protein FolD (287 aa).

Residues 165–167 (GRG), Thr-192, and Val-233 contribute to the NADP(+) site.

This sequence belongs to the tetrahydrofolate dehydrogenase/cyclohydrolase family. In terms of assembly, homodimer.

The catalysed reaction is (6R)-5,10-methylene-5,6,7,8-tetrahydrofolate + NADP(+) = (6R)-5,10-methenyltetrahydrofolate + NADPH. It carries out the reaction (6R)-5,10-methenyltetrahydrofolate + H2O = (6R)-10-formyltetrahydrofolate + H(+). The protein operates within one-carbon metabolism; tetrahydrofolate interconversion. In terms of biological role, catalyzes the oxidation of 5,10-methylenetetrahydrofolate to 5,10-methenyltetrahydrofolate and then the hydrolysis of 5,10-methenyltetrahydrofolate to 10-formyltetrahydrofolate. The polypeptide is Bifunctional protein FolD (Cutibacterium acnes (strain DSM 16379 / KPA171202) (Propionibacterium acnes)).